We begin with the raw amino-acid sequence, 155 residues long: 3-hydroxyacyl-[acyl-carrier-protein] dehydratase FabZ (155 aa).

His57 is an active-site residue.

The protein belongs to the thioester dehydratase family. FabZ subfamily.

It is found in the cytoplasm. The catalysed reaction is a (3R)-hydroxyacyl-[ACP] = a (2E)-enoyl-[ACP] + H2O. Functionally, involved in unsaturated fatty acids biosynthesis. Catalyzes the dehydration of short chain beta-hydroxyacyl-ACPs and long chain saturated and unsaturated beta-hydroxyacyl-ACPs. The polypeptide is 3-hydroxyacyl-[acyl-carrier-protein] dehydratase FabZ (Cereibacter sphaeroides (strain ATCC 17025 / ATH 2.4.3) (Rhodobacter sphaeroides)).